The primary structure comprises 426 residues: 3-phosphoshikimate 1-carboxyvinyltransferase (426 aa).

3-phosphoshikimate contacts are provided by K22, S23, and R27. Phosphoenolpyruvate is bound at residue K22. Phosphoenolpyruvate-binding residues include G96 and R124. The 3-phosphoshikimate site is built by S170, S171, Q172, S198, D314, N337, and K341. A phosphoenolpyruvate-binding site is contributed by Q172. D314 acts as the Proton acceptor in catalysis. R345, R387, and K412 together coordinate phosphoenolpyruvate.

Belongs to the EPSP synthase family. Monomer.

It is found in the cytoplasm. It carries out the reaction 3-phosphoshikimate + phosphoenolpyruvate = 5-O-(1-carboxyvinyl)-3-phosphoshikimate + phosphate. The protein operates within metabolic intermediate biosynthesis; chorismate biosynthesis; chorismate from D-erythrose 4-phosphate and phosphoenolpyruvate: step 6/7. Functionally, catalyzes the transfer of the enolpyruvyl moiety of phosphoenolpyruvate (PEP) to the 5-hydroxyl of shikimate-3-phosphate (S3P) to produce enolpyruvyl shikimate-3-phosphate and inorganic phosphate. The protein is 3-phosphoshikimate 1-carboxyvinyltransferase of Photobacterium damsela subsp. piscicida (Pasteurella piscicida).